Reading from the N-terminus, the 201-residue chain is Large ribosomal subunit protein uL18 (201 aa).

It belongs to the universal ribosomal protein uL18 family. As to quaternary structure, part of the 50S ribosomal subunit. Contacts the 5S and 23S rRNAs.

In terms of biological role, this is one of the proteins that bind and probably mediate the attachment of the 5S RNA into the large ribosomal subunit, where it forms part of the central protuberance. The chain is Large ribosomal subunit protein uL18 from Thermococcus onnurineus (strain NA1).